Reading from the N-terminus, the 1389-residue chain is Carboxypeptidase D (1389 aa).

An N-terminal signal peptide occupies residues 1-25 (MAGAARGLLWAALSLCLLPEPLRAA). At 26-1308 (HIKKAEAAAA…ENRIFGLPRE (1283 aa)) the chain is on the extracellular side. In terms of domain architecture, Peptidase M14 1 spans 46–383 (RYLHAAELGQ…ESLLTFIEKV (338 aa)). The segment at 95 to 133 (LPEARQDGEKKKKEEEEEEEEEEGEEGGGGALPGRPQVK) is disordered. Residues 96–108 (PEARQDGEKKKKE) show a composition bias toward basic and acidic residues. Residues 109 to 120 (EEEEEEEEEGEE) show a composition bias toward acidic residues. Zn(2+) contacts are provided by H139 and E142. The N-linked (GlcNAc...) asparagine glycan is linked to N172. The interval 188–235 (ERAREGDCGGGGGGGGEGGGEPGGRENSRGRDLNRSFPDQFGSAQPDL) is disordered. Gly residues predominate over residues 195 to 209 (CGGGGGGGGEGGGEP). Residues 210–221 (GGRENSRGRDLN) show a composition bias toward basic and acidic residues. N221 is a glycosylation site (N-linked (GlcNAc...) asparagine). H260 lines the Zn(2+) pocket. The active-site Proton donor/acceptor is the E353. Residues N402, N413, N432, and N472 are each glycosylated (N-linked (GlcNAc...) asparagine). Residues 511–801 (RHHHFSDMEI…RSLLQFIKQV (291 aa)) form the Peptidase M14 2 domain. Zn(2+) is bound by residues H573 and E576. Positions 614–639 (SMNPDGYEKSQEGDRGGTVGRNNSNN) are disordered. The span at 619–628 (GYEKSQEGDR) shows a compositional bias: basic and acidic residues. N635 is a glycosylation site (N-linked (GlcNAc...) asparagine). A Zn(2+)-binding site is contributed by H680. The Proton donor/acceptor role is filled by E771. 6 N-linked (GlcNAc...) asparagine glycosylation sites follow: N820, N876, N958, N981, N1073, and N1151. The Peptidase M14 3 domain occupies 935 to 1220 (RYRPYKDLSE…KSLLSMLVEV (286 aa)). A helical membrane pass occupies residues 1309–1329 (LVVTVAGASMSALVLTACIIW). S-palmitoyl cysteine attachment occurs at residues C1326, C1330, and C1332. The Cytoplasmic segment spans residues 1330–1389 (CVCSIKSNRHKDGFPTLRQHHDDYEDEIRMMSTGSKKSLLSHEFQDETDTEEETLYSSKH). Positions 1367–1389 (SLLSHEFQDETDTEEETLYSSKH) are disordered.

Belongs to the peptidase M14 family. As to quaternary structure, binds to pre-S, hepatitis B virus large envelope protein, via the carboxypeptidase-like domain. Requires Zn(2+) as cofactor. In terms of processing, the N-terminus is blocked. In terms of tissue distribution, expressed in liver, lung, kidney, heart, stomach, pancreas, spleen, gall bladder and intestine, but not in skeletal muscle.

The protein localises to the cell membrane. The enzyme catalyses Releases C-terminal Arg and Lys from polypeptides.. The polypeptide is Carboxypeptidase D (CPD) (Anas platyrhynchos (Mallard)).